Here is a 482-residue protein sequence, read N- to C-terminus: Tripartite motif-containing protein 10 (482 aa).

The RING-type zinc finger occupies 16–61; that stretch reads CPICQGTLREPVTIDCGHNFCCVCLTRYLEIPCLDPGELPTCPLCK. The segment at 95–136 adopts a B box-type zinc-finger fold; the sequence is EEEDVCLEHREKVYYFCEDDEMQLCVVCREAWEHRHHTVRFL. Residues C100, H103, C122, and H128 each coordinate Zn(2+). A B30.2/SPRY domain is found at 293-482; it reads REMKTFLEKL…GRGSKFSLSS (190 aa).

This sequence belongs to the TRIM/RBCC family. Interacts with IFNAR1; this interaction prevents association of IFNAR1 with TYK2.

The protein localises to the cytoplasm. Functionally, E3 ligase that plays an essential role in the differentiation and survival of terminal erythroid cells. May directly bind to PTEN and promote its ubiquitination, resulting in its proteasomal degradation and activation of hypertrophic signaling. In addition, plays a role in immune response regulation by repressing the phosphorylation of STAT1 and STAT2 in the interferon/JAK/STAT signaling pathway independent of its E3 ligase activity. Mechanistically, interacts with the intracellular domain of IFNAR1 and thereby inhibits the association of TYK2 and IFNAR1. The protein is Tripartite motif-containing protein 10 (TRIM10) of Sus scrofa (Pig).